The primary structure comprises 198 residues: Phage-like element PBSX protein XkdA (198 aa).

This sequence to B.subtilis YqaB.

The sequence is that of Phage-like element PBSX protein XkdA (xkdA) from Bacillus subtilis (strain 168).